An 82-amino-acid chain; its full sequence is Small ribosomal subunit protein bS16 (82 aa).

This sequence belongs to the bacterial ribosomal protein bS16 family.

In Clostridium botulinum (strain Okra / Type B1), this protein is Small ribosomal subunit protein bS16.